A 608-amino-acid chain; its full sequence is Probable cytosolic Fe-S cluster assembly factor SPAC806.02c (608 aa).

13–20 is a binding site for ATP; the sequence is GKGGVGKS. [4Fe-4S] cluster contacts are provided by Cys-201 and Cys-204. WD repeat units lie at residues 288-327, 331-371, 376-415, 421-460, 465-504, 529-567, and 576-608; these read GHTG…LVHV, FHTR…WECT, GHEN…EFDC, EHTQ…WALT, GHTN…EDVA, IHKG…EALW, and AHGV…WSFK.

It in the N-terminal section; belongs to the Mrp/NBP35 ATP-binding proteins family. NUBP2/CFD1 subfamily. In the C-terminal section; belongs to the WD repeat CIA1 family. Heterotetramer of 2 nbp35 and 2 SPAC806.02c chains. Requires [4Fe-4S] cluster as cofactor.

It is found in the cytoplasm. The protein localises to the nucleus. Its function is as follows. Fusion protein of two essential components of the cytosolic iron-sulfur (Fe/S) protein assembly (CIA) machinery. Required for maturation of extramitochondrial Fe-S proteins. May form a heterotetramer with nubp35, functioning as a Fe-S scaffold complex, mediating the de novo assembly of an Fe-S cluster and its transfer to target apoproteins. This Schizosaccharomyces pombe (strain 972 / ATCC 24843) (Fission yeast) protein is Probable cytosolic Fe-S cluster assembly factor SPAC806.02c.